Consider the following 373-residue polypeptide: CXADR-like membrane protein (373 aa).

The first 18 residues, 1-18 (MSLLLLLLLVSYYVGTLG), serve as a signal peptide directing secretion. Ig-like C2-type domains are found at residues 19-127 (THTE…VILK) and 135-224 (PKCE…VRVT). Residues 19-235 (THTEIKRVAE…QYVQSIGMVA (217 aa)) lie on the Extracellular side of the membrane. 2 cysteine pairs are disulfide-bonded: Cys-35–Cys-111 and Cys-153–Cys-208. N-linked (GlcNAc...) asparagine glycans are attached at residues Asn-74 and Asn-197. A helical transmembrane segment spans residues 236–256 (GAVTGIVAGALLIFLLVWLLI). Residues 257–373 (RRKDKERYEE…PSQSRAFQTV (117 aa)) lie on the Cytoplasmic side of the membrane. Basic and acidic residues predominate over residues 264 to 281 (YEEEERPNEIREDAEAPK). The tract at residues 264 to 373 (YEEEERPNEI…PSQSRAFQTV (110 aa)) is disordered. Over residues 288–314 (SSSSSGSRSSRSGSSSTRSTANSASRS) the composition is skewed to low complexity. Residues 355 to 373 (KAETTPSMIPSQSRAFQTV) show a composition bias toward polar residues.

Predominantly expressed in epithelial cells within different tissues and in the white adipose tissue. Expressed at high levels in small intestine and placenta, at intermediate levels in the heart, skeletal muscle, colon, spleen, kidney and lung and at low levels in the liver and peripheral blood leukocytes. Highly abundant in the intestine during embryo and fetal development (at protein level).

It localises to the cell junction. It is found in the tight junction. Its subcellular location is the cell membrane. In terms of biological role, may be involved in the cell-cell adhesion. May play a role in adipocyte differentiation and development of obesity. Is required for normal small intestine development. This is CXADR-like membrane protein (CLMP) from Homo sapiens (Human).